The chain runs to 697 residues: Serine/threonine-protein kinase tousled-like 2 (697 aa).

Disordered regions lie at residues 25-159 (VAKG…SQSE) and 288-316 (KLLI…SKSN). Positions 31 to 44 (HNESSNQSLCSVGS) are enriched in polar residues. Residues 46–61 (SDKELETPEKKSNDQR) are compositionally biased toward basic and acidic residues. Positions 109–145 (SSPQHSLSNPPAAVQQGSPSSISSVNTDHSHTSTSHK) are enriched in polar residues. Coiled-coil stretches lie at residues 265-294 (AFQN…IKKK) and 336-373 (KLRL…IHNE). The 279-residue stretch at 388–666 (YLLLHLLGRG…VHQLASDPYL (279 aa)) folds into the Protein kinase domain. ATP-binding positions include 394–402 (LGRGGFSEV) and Lys-417. Asp-518 serves as the catalytic Proton acceptor.

The protein belongs to the protein kinase superfamily. Ser/Thr protein kinase family. As to quaternary structure, monomer. May form homodimers; homodimerization may enhance autophosphoylation and enzymatic activity. Heterodimer with TLK1. Mg(2+) serves as cofactor. Phosphorylated. Autophosphorylated; phosphorylation promotes the assembly of higher order oligomers and enzymatic activity.

It is found in the nucleus. It localises to the nucleoplasm. Its subcellular location is the cytoplasm. The protein resides in the perinuclear region. The protein localises to the cytoskeleton. It catalyses the reaction L-seryl-[protein] + ATP = O-phospho-L-seryl-[protein] + ADP + H(+). The catalysed reaction is L-threonyl-[protein] + ATP = O-phospho-L-threonyl-[protein] + ADP + H(+). Functionally, serine/threonine-protein kinase involved in the process of chromatin assembly and probably also DNA replication, transcription, repair, and chromosome segregation. Negative regulator of amino acid starvation-induced autophagy. The protein is Serine/threonine-protein kinase tousled-like 2 of Danio rerio (Zebrafish).